We begin with the raw amino-acid sequence, 480 residues long: Proline--tRNA ligase (480 aa).

This sequence belongs to the class-II aminoacyl-tRNA synthetase family. ProS type 3 subfamily. As to quaternary structure, homodimer.

The protein localises to the cytoplasm. It carries out the reaction tRNA(Pro) + L-proline + ATP = L-prolyl-tRNA(Pro) + AMP + diphosphate. Its function is as follows. Catalyzes the attachment of proline to tRNA(Pro) in a two-step reaction: proline is first activated by ATP to form Pro-AMP and then transferred to the acceptor end of tRNA(Pro). The sequence is that of Proline--tRNA ligase from Pyrococcus abyssi (strain GE5 / Orsay).